Consider the following 961-residue polypeptide: DNA replication licensing factor MCM2 (961 aa).

A compositionally biased stretch (polar residues) spans 1–17 (MDDSENNAPSTPGSPGF). 2 disordered regions span residues 1-81 (MDDS…FNDN) and 120-220 (AEAE…EEDE). Residues 39 to 78 (SDDDDDDVVGAEEAEVDPNVLPEDDGVVAAEEEEDGEDLF) are compositionally biased toward acidic residues. 2 stretches are compositionally biased toward basic and acidic residues: residues 120 to 146 (AEAE…LHDQ) and 166 to 176 (PPREPRTPRSD). A compositionally biased stretch (acidic residues) spans 205–220 (QTDDDPYEDEFDEEDE). The C4-type zinc finger occupies 380–406 (CSKCGTVLGPFFQNSYTEVKVGSCPEC). The MCM domain maps to 524 to 730 (IGERIVKSIA…FTDEMLARFV (207 aa)). 574-581 (GDPGTAKS) contributes to the ATP binding site. The short motif at 706 to 709 (SRFD) is the Arginine finger element.

It belongs to the MCM family. As to quaternary structure, component of the minichromosome maintenance (MCM) complex, a heterotetramer composed of MCM2, MCM3, MCM4, MCM5, MCM6 and MCM7.

The protein resides in the nucleus. It catalyses the reaction ATP + H2O = ADP + phosphate + H(+). Probable component of the MCM2-7 complex (MCM complex) that may function as a DNA helicase and which is essential to undergo a single round of replication initiation and elongation per cell cycle in eukaryotic cells. The polypeptide is DNA replication licensing factor MCM2 (Oryza sativa subsp. indica (Rice)).